The following is a 1199-amino-acid chain: DNA polymerase beta (1199 aa).

It belongs to the DNA polymerase type-B family.

The catalysed reaction is DNA(n) + a 2'-deoxyribonucleoside 5'-triphosphate = DNA(n+1) + diphosphate. In terms of biological role, DNA-directed DNA polymerase involved in viral DNA replication. This is DNA polymerase beta from Ornithodoros (relapsing fever ticks).